Consider the following 563-residue polypeptide: MTTLLSFLTSLCSAAIHQAFPELEELTLDITPSTKEHFGHYQCNDAMKLARVLRKSPRAIAESIVAHIPPAPFSSIEIAGAGFINFTFSKEFLASQLQTFSKELANGFRAASPQKVIIDFSSPNIAKDMHVGHLRSTIIGDCLARCFSFVGHDVLRLNHIGDWGTAFGMLITYLQETSQEAIHQLEDLTALYKKAHARFAEDSEFKKRSQHNVVALQSGDAQALALWKQICSVSEKSFQTIYSILDVELHTRGESFYNPFLAEVVADLESKNLVTLSDGAKCVFHEAFSIPLMIQKSDGGYNYATTDVAAMRYRIQQDQADRILIVTDSGQSLHFQLLEATCLAAGYLPSKGIFSHVGFGLVLDTQGRKFKTRSGENIKLRELLDTAVEKAKESLKAHRPDISEEELAYQGPILGINAIKYADLSSHRINDYVFSFEKMLRFEGNTAMSLLYAYVRIQGIKRRMGLESLPQEEPLAIHEPAEEALALTLLRFPEILDLTLRELCPHFLTDYLYALTNKFNAFFRDCHIEGSDSQQERLYLCGLTERTLSTGMHLLGLKTLNHL.

The short motif at 123 to 133 (PNIAKDMHVGH) is the 'HIGH' region element.

The protein belongs to the class-I aminoacyl-tRNA synthetase family. In terms of assembly, monomer.

It localises to the cytoplasm. The catalysed reaction is tRNA(Arg) + L-arginine + ATP = L-arginyl-tRNA(Arg) + AMP + diphosphate. The sequence is that of Arginine--tRNA ligase from Chlamydia trachomatis serovar A (strain ATCC VR-571B / DSM 19440 / HAR-13).